The chain runs to 427 residues: Enolase (427 aa).

(2R)-2-phosphoglycerate is bound at residue Q163. E205 (proton donor) is an active-site residue. Mg(2+)-binding residues include D242, E285, and D312. 4 residues coordinate (2R)-2-phosphoglycerate: K337, R366, S367, and K388. Residue K337 is the Proton acceptor of the active site.

Belongs to the enolase family. The cofactor is Mg(2+).

It localises to the cytoplasm. The protein resides in the secreted. The protein localises to the cell surface. The enzyme catalyses (2R)-2-phosphoglycerate = phosphoenolpyruvate + H2O. It functions in the pathway carbohydrate degradation; glycolysis; pyruvate from D-glyceraldehyde 3-phosphate: step 4/5. In terms of biological role, catalyzes the reversible conversion of 2-phosphoglycerate (2-PG) into phosphoenolpyruvate (PEP). It is essential for the degradation of carbohydrates via glycolysis. The chain is Enolase from Xanthobacter autotrophicus (strain ATCC BAA-1158 / Py2).